The sequence spans 156 residues: 1-methylthio-D-xylulose 5-phosphate methylsulfurylase (156 aa).

Residues 55 to 122 form the Cupin type-2 domain; that stretch reads YFEVGPGGHS…ADEALGFLCM (68 aa). Residues glutamate 67, histidine 69, histidine 73, and histidine 107 each coordinate Mn(2+). Residue cysteine 121 is part of the active site.

It carries out the reaction S-methyl-1-thio-D-xylulose 5-phosphate + glutathione = S-(methylsulfanyl)glutathione + 1-deoxy-D-xylulose 5-phosphate. It catalyses the reaction S-(methylsulfanyl)glutathione + AH2 = methanethiol + glutathione + A. Its pathway is amino-acid biosynthesis; L-methionine biosynthesis via salvage pathway. It participates in metabolic intermediate biosynthesis; 1-deoxy-D-xylulose 5-phosphate biosynthesis. Functionally, catalyzes the formation of S-(methylsulfanyl)glutathione and 1-deoxy-D-xylulose 5-phosphate (DXP) from 1-methylthioxylulose 5-phosphate (MTXu-5P). The S-(methylsulfanyl)glutathione is reductively cleaved to relase methanethiol in a second reaction. Involved in the MTA-isoprenoid shunt of the methionine salvage pathway. The sequence is that of 1-methylthio-D-xylulose 5-phosphate methylsulfurylase from Rhodospirillum rubrum (strain ATCC 11170 / ATH 1.1.1 / DSM 467 / LMG 4362 / NCIMB 8255 / S1).